The following is a 143-amino-acid chain: Small ribosomal subunit protein uS12 (143 aa).

Basic residues predominate over residues 1-20 (MGKPRGLRTARKLKNHRREQ). Residues 1 to 28 (MGKPRGLRTARKLKNHRREQRWHDKDYK) form a disordered region. Pro62 carries the post-translational modification Hydroxyproline.

It belongs to the universal ribosomal protein uS12 family. Component of the 40S small ribosomal subunit.

Its subcellular location is the cytoplasm. It localises to the cytosol. The protein resides in the rough endoplasmic reticulum. The sequence is that of Small ribosomal subunit protein uS12 (RPS23) from Lumbricus rubellus (Humus earthworm).